The chain runs to 1853 residues: Cellulosomal-scaffolding protein A (1853 aa).

The N-terminal stretch at 1-28 is a signal peptide; the sequence is MRKVISMLLVVAMLTTIFAAMIPQTVSA. Cohesin domains are found at residues 29 to 182 and 183 to 322; these read ATMT…VPSD and GVVV…VNVG. Linker (Pro/Thr-rich) stretches follow at residues 323–363 and 523–559; these read NATP…PANT and GGSV…SDDP. Over residues 323–364 the composition is skewed to low complexity; the sequence is NATPTKGATPTNTATPTKSATATPTRPSVPTNTPTNTPANTP. Disordered regions lie at residues 323–367 and 525–559; these read NATP…PVSG and SVVP…SDDP. Positions 365 to 523 constitute a CBM3 domain; that stretch reads VSGNLKVEFY…GVLVWGKEPG (159 aa). A compositionally biased stretch (low complexity) spans 525–555; it reads SVVPSTQPVTTPPATTKPPATTKPPATTIPP. Cohesin domains are found at residues 560 to 704, 724 to 866, 889 to 1031, 1054 to 1196, 1219 to 1361, 1384 to 1526, and 1548 to 1690; these read NAIK…NVGD, AVRI…VNVG, and KLTL…VLVT. The 68-residue stretch at 1785 to 1852 folds into the Dockerin domain; that stretch reads IMMWVGDIVK…FGATSSDYDA (68 aa).

In terms of processing, O-glycosylated on most but not all Thr residues of the linker units. The reducing sugar is galactopyranose.

Its subcellular location is the secreted. Functionally, acts as a scaffolding protein in the cellulosome. It promotes binding of cellulose to the catalytic domains of the cellulolytic enzymes. This Acetivibrio thermocellus (strain ATCC 27405 / DSM 1237 / JCM 9322 / NBRC 103400 / NCIMB 10682 / NRRL B-4536 / VPI 7372) (Clostridium thermocellum) protein is Cellulosomal-scaffolding protein A (cipA).